The sequence spans 449 residues: Putative gustatory receptor 77a (449 aa).

At 1 to 27 (MPLPLGDPLALAVSPQLGYIRITAMPR) the chain is on the cytoplasmic side. The chain crosses the membrane as a helical span at residues 28–50 (WLQLPGMSALGILYSLTRVFGLM). Over 51–70 (ATANWSPRGIKRVRQSLYLR) the chain is Extracellular. The helical transmembrane segment at 71–93 (IHGCVMLIFVGCFSPFAFWCIFQ) threads the bilayer. The Cytoplasmic segment spans residues 94–102 (RMAFLRQNR). Residues 103 to 125 (ILLMIGFNRYVLLLVCAFMTLWI) traverse the membrane as a helical segment. Residues 126–205 (HCFKQAEIIG…VRRNFMYACS (80 aa)) are Extracellular-facing. A helical transmembrane segment spans residues 206–228 (LVFVSVCQAILQLSLGMYTMAIL). At 229-298 (FLGHLVRHSN…LLKLHRSICS (70 aa)) the chain is on the cytoplasmic side. The chain crosses the membrane as a helical span at residues 299–321 (LCAVQAVCFLGFVPLECTIHLFF). The Extracellular segment spans residues 322–340 (TYFMKYSKFILRKYGRSFP). Residues 341-363 (LNYFAIAFLVGLFTNLLLVILPT) traverse the membrane as a helical segment. At 364 to 420 (YYSERRFNCTREIIKGGGLAFPSRITVKQLRHTMHFYGLYLKNVEHVFAVSACGLFK) the chain is on the cytoplasmic side. Residues 421–443 (LNNAILFCIVGAILEYLMILIQF) traverse the membrane as a helical segment. At 444–449 (DKVLNK) the chain is on the extracellular side.

Belongs to the insect chemoreceptor superfamily. Gustatory receptor (GR) family. Gr77a subfamily. As to expression, in larvae, is expressed in dorsal pharyngeal sense organ.

It is found in the cell membrane. Its function is as follows. Probable gustatory receptor which mediates acceptance or avoidance behavior, depending on its substrates. This Drosophila melanogaster (Fruit fly) protein is Putative gustatory receptor 77a (Gr77a).